The chain runs to 1372 residues: DNA-directed RNA polymerase subunit beta (1372 aa).

Belongs to the RNA polymerase beta chain family. In terms of assembly, the RNAP catalytic core consists of 2 alpha, 1 beta, 1 beta' and 1 omega subunit. When a sigma factor is associated with the core the holoenzyme is formed, which can initiate transcription.

The catalysed reaction is RNA(n) + a ribonucleoside 5'-triphosphate = RNA(n+1) + diphosphate. Its function is as follows. DNA-dependent RNA polymerase catalyzes the transcription of DNA into RNA using the four ribonucleoside triphosphates as substrates. This chain is DNA-directed RNA polymerase subunit beta, found in Psychrobacter cryohalolentis (strain ATCC BAA-1226 / DSM 17306 / VKM B-2378 / K5).